Consider the following 231-residue polypeptide: Mediator of RNA polymerase II transcription subunit 18 (231 aa).

Positions 191–218 (HLTDIEALNKAVKELEKVKTELHGLMNL) form a coiled coil.

It belongs to the Mediator complex subunit 18 family. Component of the Mediator complex.

It is found in the nucleus. Component of the Mediator complex, a coactivator involved in the regulated transcription of nearly all RNA polymerase II-dependent genes. Mediator functions as a bridge to convey information from gene-specific regulatory proteins to the basal RNA polymerase II transcription machinery. Mediator is recruited to promoters by direct interactions with regulatory proteins and serves as a scaffold for the assembly of a functional preinitiation complex with RNA polymerase II and the general transcription factors. The protein is Mediator of RNA polymerase II transcription subunit 18 (SRB5) of Yarrowia lipolytica (strain CLIB 122 / E 150) (Yeast).